The chain runs to 62 residues: Phylloseptin-Az7 (62 aa).

The signal sequence occupies residues 1–19 (LKKSLFLVLFLGLVSLSIC). The propeptide occupies 20–40 (EEEKRETEEKENEQEDDKSEE). Phe61 is subject to Phenylalanine amide.

This sequence belongs to the frog skin active peptide (FSAP) family. Phylloseptin subfamily. As to expression, expressed by the skin glands.

The protein resides in the secreted. In terms of biological role, has antimicrobial activity. The sequence is that of Phylloseptin-Az7 (psn15) from Pithecopus azureus (Orange-legged monkey tree frog).